A 419-amino-acid chain; its full sequence is MDKFRVQGPTKLQGEVTISGAKNAALPILFAALLAEEPVEIQNVPKLKDVDTSMKLLSQLGAKVERNGSVHIDARDVNVFCAPYELVKTMRASIWALGPLVARFGQGQVSLPGGCSIGARPVDLHISGLEQLGATIKLEEGYVKASVEGRLKGAHIVMDKVSVGATVTIMCAATLAEGTTIIENAAREPEIVDTANFLVTLGAKISGQGTDRITIEGVERLGGGVYRVLPDRIETGTFLVAAAISRGKIICRNAQPDTLDAVLAKLRDAGADIETGDDWISLDMHGKRPKAVNVRTAPHPAFPTDMQAQFTLLNLVAEGTGFITETVFENRFMHVPELSRMGAHAEIESNTVICHGVEKLSGAQVMATDLRASASLVLAGCIAEGTTIVDRIYHIDRGYERIEDKLRALGANIERVKGE.

Residue 22-23 coordinates phosphoenolpyruvate; the sequence is KN. Position 91 (Arg-91) interacts with UDP-N-acetyl-alpha-D-glucosamine. Catalysis depends on Cys-115, which acts as the Proton donor. The residue at position 115 (Cys-115) is a 2-(S-cysteinyl)pyruvic acid O-phosphothioketal. Residues 120–124, 160–163, Asp-305, and Val-327 contribute to the UDP-N-acetyl-alpha-D-glucosamine site; these read RPVDL and KVSV.

This sequence belongs to the EPSP synthase family. MurA subfamily.

It localises to the cytoplasm. It catalyses the reaction phosphoenolpyruvate + UDP-N-acetyl-alpha-D-glucosamine = UDP-N-acetyl-3-O-(1-carboxyvinyl)-alpha-D-glucosamine + phosphate. It functions in the pathway cell wall biogenesis; peptidoglycan biosynthesis. Its function is as follows. Cell wall formation. Adds enolpyruvyl to UDP-N-acetylglucosamine. In Escherichia fergusonii (strain ATCC 35469 / DSM 13698 / CCUG 18766 / IAM 14443 / JCM 21226 / LMG 7866 / NBRC 102419 / NCTC 12128 / CDC 0568-73), this protein is UDP-N-acetylglucosamine 1-carboxyvinyltransferase.